We begin with the raw amino-acid sequence, 127 residues long: Large ribosomal subunit protein bL19 (127 aa).

It belongs to the bacterial ribosomal protein bL19 family.

In terms of biological role, this protein is located at the 30S-50S ribosomal subunit interface and may play a role in the structure and function of the aminoacyl-tRNA binding site. This chain is Large ribosomal subunit protein bL19, found in Ruegeria pomeroyi (strain ATCC 700808 / DSM 15171 / DSS-3) (Silicibacter pomeroyi).